A 306-amino-acid chain; its full sequence is Ribonuclease Z (306 aa).

Residues histidine 63, histidine 65, aspartate 67, histidine 68, histidine 141, aspartate 211, and histidine 269 each coordinate Zn(2+). Residue aspartate 67 is the Proton acceptor of the active site.

Belongs to the RNase Z family. As to quaternary structure, homodimer. The cofactor is Zn(2+).

The catalysed reaction is Endonucleolytic cleavage of RNA, removing extra 3' nucleotides from tRNA precursor, generating 3' termini of tRNAs. A 3'-hydroxy group is left at the tRNA terminus and a 5'-phosphoryl group is left at the trailer molecule.. Its function is as follows. Zinc phosphodiesterase, which displays some tRNA 3'-processing endonuclease activity. Probably involved in tRNA maturation, by removing a 3'-trailer from precursor tRNA. The polypeptide is Ribonuclease Z (Staphylococcus aureus (strain USA300)).